Consider the following 31-residue polypeptide: Cytochrome b6-f complex subunit 6 (31 aa).

The chain crosses the membrane as a helical span at residues 3 to 23; sequence IAIDYFLLVGFCFAFTSGLYL.

Belongs to the PetL family. The 4 large subunits of the cytochrome b6-f complex are cytochrome b6, subunit IV (17 kDa polypeptide, PetD), cytochrome f and the Rieske protein, while the 4 small subunits are PetG, PetL, PetM and PetN. The complex functions as a dimer.

The protein localises to the plastid. It localises to the chloroplast thylakoid membrane. Its function is as follows. Component of the cytochrome b6-f complex, which mediates electron transfer between photosystem II (PSII) and photosystem I (PSI), cyclic electron flow around PSI, and state transitions. PetL is important for photoautotrophic growth as well as for electron transfer efficiency and stability of the cytochrome b6-f complex. This chain is Cytochrome b6-f complex subunit 6, found in Trieres chinensis (Marine centric diatom).